The chain runs to 44 residues: Conotoxin Cl9a (44 aa).

4-carboxyglutamate occurs at positions 7, 8, and 24. Disulfide bonds link C9–C33, C15–C40, and C23–C42.

Expressed by the venom duct.

It is found in the secreted. The chain is Conotoxin Cl9a from Californiconus californicus (California cone).